Reading from the N-terminus, the 196-residue chain is Imidazoleglycerol-phosphate dehydratase (196 aa).

Belongs to the imidazoleglycerol-phosphate dehydratase family.

It localises to the cytoplasm. The enzyme catalyses D-erythro-1-(imidazol-4-yl)glycerol 3-phosphate = 3-(imidazol-4-yl)-2-oxopropyl phosphate + H2O. It participates in amino-acid biosynthesis; L-histidine biosynthesis; L-histidine from 5-phospho-alpha-D-ribose 1-diphosphate: step 6/9. This is Imidazoleglycerol-phosphate dehydratase from Caulobacter sp. (strain K31).